Here is a 299-residue protein sequence, read N- to C-terminus: Bifunctional protein FolD (299 aa).

Residues 168 to 170 (GRS), S193, and I234 contribute to the NADP(+) site.

The protein belongs to the tetrahydrofolate dehydrogenase/cyclohydrolase family. As to quaternary structure, homodimer.

It carries out the reaction (6R)-5,10-methylene-5,6,7,8-tetrahydrofolate + NADP(+) = (6R)-5,10-methenyltetrahydrofolate + NADPH. It catalyses the reaction (6R)-5,10-methenyltetrahydrofolate + H2O = (6R)-10-formyltetrahydrofolate + H(+). The protein operates within one-carbon metabolism; tetrahydrofolate interconversion. Functionally, catalyzes the oxidation of 5,10-methylenetetrahydrofolate to 5,10-methenyltetrahydrofolate and then the hydrolysis of 5,10-methenyltetrahydrofolate to 10-formyltetrahydrofolate. The sequence is that of Bifunctional protein FolD from Brucella abortus (strain S19).